A 1477-amino-acid polypeptide reads, in one-letter code: MGTALLQRGGCFLLCLSLLLLGCWAELGSGLEFPGAEGQWTRFPKWNACCESEMSFQLKTRSARGLVLYFDDEGFCDFLELILTRGGRLQLSFSIFCAEPATLLADTPVNDGAWHSVRIRRQFRNTTLFIDQVEAKWVEVKSKRRDMTVFSGLFVGGLPPELRAAALKLTLASVREREPFKGWIRDVRVNSSQVLPVDSGEVKLDDEPPNSGGGSPCEAGEEGEGGVCLNGGVCSVVDDQAVCDCSRTGFRGKDCSQEDNNVEGLAHLMMGDQGKSKGKEEYIATFKGSEYFCYDLSQNPIQSSSDEITLSFKTLQRNGLMLHTGKSADYVNLALKNGAVSLVINLGSGAFEALVEPVNGKFNDNAWHDVKVTRNLRQHSGIGHAMVTISVDGILTTTGYTQEDYTMLGSDDFFYVGGSPSTADLPGSPVSNNFMGCLKEVVYKNNDVRLELSRLAKQGDPKMKIHGVVAFKCENVATLDPITFETPESFISLPKWNAKKTGSISFDFRTTEPNGLILFSHGKPRHQKDAKHPQMIKVDFFAIEMLDGHLYLLLDMGSGTIKIKALLKKVNDGEWYHVDFQRDGRSGTISVNTLRTPYTAPGESEILDLDDELYLGGLPENKAGLVFPTEVWTALLNYGYVGCIRDLFIDGQSKDIRQMAEVQSTAGVKPSCSKETAKPCLSNPCKNNGMCRDGWNRYVCDCSGTGYLGRSCEREATVLSYDGSMFMKIQLPVVMHTEAEDVSLRFRSQRAYGILMATTSRDSADTLRLELDAGRVKLTVNLDCIRINCNSSKGPETLFAGYNLNDNEWHTVRVVRRGKSLKLTVDDQQAMTGQMAGDHTRLEFHNIETGIITERRYLSSVPSNFIGHLQSLTFNGMAYIDLCKNGDIDYCELNARFGFRNIIADPVTFKTKSSYVALATLQAYTSMHLFFQFKTTSLDGLILYNSGDGNDFIVVELVKGYLHYVFDLGNGANLIKGSSNKPLNDNQWHNVMISRDTSNLHTVKIDTKITTQITAGARNLDLKSDLYIGGVAKETYKSLPKLVHAKEGFQGCLASVDLNGRLPDLISDALFCNGQIERGCEGPSTTCQEDSCSNQGVCLQQWDGFSCDCSMTSFSGPLCNDPGTTYIFSKGGGQITYKWPPNDRPSTRADRLAIGFSTVQKEAVLVRVDSSSGLGDYLELHIHQGKIGVKFNVGTDDIAIEESNAIINDGKYHVVRFTRSGGNATLQVDSWPVIERYPAGRQLTIFNSQATIIIGGKEQGQPFQGQLSGLYYNGLKVLNMAAENDANIAIVGNVRLVGEVPSSMTTESTATAMQSEMSTSIMETTTTLATSTARRGKPPTKEPISQTTDDILVASAECPSDDEDIDPCEPSSGGLANPTRAGGREPYPGSAEVIRESSSTTGMVVGIVAAAALCILILLYAMYKYRNRDEGSYHVDESRNYISNSAQSNGAVVKEKQPSSAKSSNKNKKNKDKEYYV.

A signal peptide spans 1–30; that stretch reads MGTALLQRGGCFLLCLSLLLLGCWAELGSG. The 187-residue stretch at 31–217 folds into the Laminin G-like 1 domain; the sequence is LEFPGAEGQW…PPNSGGGSPC (187 aa). Residues 31-1401 lie on the Extracellular side of the membrane; that stretch reads LEFPGAEGQW…EVIRESSSTT (1371 aa). N-linked (GlcNAc...) asparagine glycans are attached at residues Asn125 and Asn190. Residues 198 to 221 are disordered; it reads DSGEVKLDDEPPNSGGGSPCEAGE. Positions 213–256 constitute an EGF-like 1 domain; sequence GGSPCEAGEEGEGGVCLNGGVCSVVDDQAVCDCSRTGFRGKDCS. Cystine bridges form between Cys228–Cys243 and Cys245–Cys255. Laminin G-like domains are found at residues 283–473 and 480–672; these read IATF…AFKC and DPIT…KPSC. The Ca(2+) site is built by Asp329, Leu346, and Met407. Intrachain disulfides connect Cys437-Cys473, Cys643-Cys672, Cys680-Cys691, Cys685-Cys700, and Cys702-Cys712. One can recognise an EGF-like 2 domain in the interval 676 to 713; it reads TAKPCLSNPCKNNGMCRDGWNRYVCDCSGTGYLGRSCE. 2 Laminin G-like domains span residues 718–891 and 905–1080; these read VLSY…IDYC and DPVT…ERGC. Ca(2+) is bound by residues Asp765 and Leu782. Asn790 carries N-linked (GlcNAc...) asparagine glycosylation. Arg841 lines the Ca(2+) pocket. 5 disulfides stabilise this stretch: Cys883/Cys891, Cys1052/Cys1080, Cys1087/Cys1098, Cys1092/Cys1107, and Cys1109/Cys1119. The EGF-like 3 domain occupies 1083-1120; the sequence is PSTTCQEDSCSNQGVCLQQWDGFSCDCSMTSFSGPLCN. In terms of domain architecture, Laminin G-like 6 spans 1126 to 1294; sequence YIFSKGGGQI…DANIAIVGNV (169 aa). Positions 1176 and 1193 each coordinate Ca(2+). An N-linked (GlcNAc...) asparagine glycan is attached at Asn1223. Positions 1245 and 1247 each coordinate Ca(2+). A disordered region spans residues 1325 to 1390; that stretch reads TTTLATSTAR…AGGREPYPGS (66 aa). A glycan (O-linked (Xyl...) (heparan sulfate) serine) is linked at Ser1355. A helical transmembrane segment spans residues 1402 to 1422; that stretch reads GMVVGIVAAAALCILILLYAM. Residues 1423-1477 are Cytoplasmic-facing; it reads YKYRNRDEGSYHVDESRNYISNSAQSNGAVVKEKQPSSAKSSNKNKKNKDKEYYV. Positions 1444-1470 are interaction with CASK; it reads NSAQSNGAVVKEKQPSSAKSSNKNKKN. The disordered stretch occupies residues 1444 to 1477; the sequence is NSAQSNGAVVKEKQPSSAKSSNKNKKNKDKEYYV.

The protein belongs to the neurexin family. In terms of assembly, interacts (via laminin G-like domain 2 and/or laminin G-like domain 6) with NLGN1 forming a heterotetramer, where one NLGN1 dimer interacts with one NRXN1 dimer. Also interacts (via laminin G-like domain 2 and/or laminin G-like domain 6) with NLGN2, NLGN3 and NLGN4L; interactions with NLGN1, NLGN2, NLGN3 and NLGN4L are calcium-dependent. Interacts (via cytoplasmic C-terminal region) with CASK (via the PDZ, SH3 and guanylate kinase-like domains). Interacts (via cytoplasmic C-terminus) with CASKIN1 and APBA1. Interacts (via laminin G-like domain 2) with NXPH1 and NXPH3. Alpha-type isoforms (neurexin-1-alpha) interact (via laminin G-like domain 2 and/or laminin G-like domain 6) with DAG1 (via alpha-dystroglycan chain). Interacts with LRRTM1, LRRTM2, LRRTM3 and LRRTM4. Interacts with SYT13 and SYTL1. Interacts with CBLN1, CBLN2 and, less avidly, with CBLN4. Interacts with CLSTN3. In terms of processing, O-glycosylated; contains heparan sulfate. Heparan sulfate attachment is required for synapse development by mediating interactions with neuroligins and LRRTM2. Brain.

It localises to the presynaptic cell membrane. In terms of biological role, cell surface protein involved in cell-cell-interactions, exocytosis of secretory granules and regulation of signal transmission. Function is isoform-specific. Alpha-type isoforms have a long N-terminus with six laminin G-like domains and play an important role in synaptic signal transmission. Alpha-type isoforms play a role in the regulation of calcium channel activity and Ca(2+)-triggered neurotransmitter release at synapses and at neuromuscular junctions. They play an important role in Ca(2+)-triggered exocytosis of secretory granules in pituitary gland. They may affect their functions at synapses and in endocrine cells via their interactions with proteins from the exocytotic machinery. Likewise, alpha-type isoforms play a role in regulating the activity of postsynaptic NMDA receptors, a subtype of glutamate-gated ion channels. Both alpha-type and beta-type isoforms may play a role in the formation or maintenance of synaptic junctions via their interactions (via the extracellular domains) with neuroligin family members, CBLN1 or CBLN2. In vitro, triggers the de novo formation of presynaptic structures. May be involved in specification of excitatory synapses. Alpha-type isoforms were first identified as receptors for alpha-latrotoxin from spider venom. The polypeptide is Neurexin-1 (NRXN1) (Homo sapiens (Human)).